The following is a 233-amino-acid chain: Phosphatidylserine decarboxylase proenzyme (233 aa).

The Schiff-base intermediate with substrate; via pyruvic acid role is filled by serine 190. Residue serine 190 is modified to Pyruvic acid (Ser); by autocatalysis.

It belongs to the phosphatidylserine decarboxylase family. PSD-A subfamily. Heterodimer of a large membrane-associated beta subunit and a small pyruvoyl-containing alpha subunit. The cofactor is pyruvate. Is synthesized initially as an inactive proenzyme. Formation of the active enzyme involves a self-maturation process in which the active site pyruvoyl group is generated from an internal serine residue via an autocatalytic post-translational modification. Two non-identical subunits are generated from the proenzyme in this reaction, and the pyruvate is formed at the N-terminus of the alpha chain, which is derived from the carboxyl end of the proenzyme. The post-translation cleavage follows an unusual pathway, termed non-hydrolytic serinolysis, in which the side chain hydroxyl group of the serine supplies its oxygen atom to form the C-terminus of the beta chain, while the remainder of the serine residue undergoes an oxidative deamination to produce ammonia and the pyruvoyl prosthetic group on the alpha chain.

The protein resides in the cell membrane. It catalyses the reaction a 1,2-diacyl-sn-glycero-3-phospho-L-serine + H(+) = a 1,2-diacyl-sn-glycero-3-phosphoethanolamine + CO2. Its pathway is phospholipid metabolism; phosphatidylethanolamine biosynthesis; phosphatidylethanolamine from CDP-diacylglycerol: step 2/2. In terms of biological role, catalyzes the formation of phosphatidylethanolamine (PtdEtn) from phosphatidylserine (PtdSer). This chain is Phosphatidylserine decarboxylase proenzyme, found in Xanthobacter autotrophicus (strain ATCC BAA-1158 / Py2).